We begin with the raw amino-acid sequence, 191 residues long: Early nodulin-like protein 8 (191 aa).

A signal peptide spans 1-22 (MGVMSLSKTMVVVVLQVMILLG). In terms of domain architecture, Phytocyanin spans 31–133 (TLYKVGDLDA…YQKLLVSVGT (103 aa)). Cysteine 87 and cysteine 121 are joined by a disulfide. N-linked (GlcNAc...) asparagine glycosylation is found at asparagine 104 and asparagine 108. Serine 165 carries GPI-anchor amidated serine lipidation. The propeptide at 166–191 (SASSSLISAFSTVAASLACAVVGAIM) is removed in mature form.

The protein belongs to the early nodulin-like (ENODL) family. In terms of tissue distribution, mostly expressed in seedlings and roots, and, to a lower extent, in leaves, flowers, stems and seeds.

It localises to the cell membrane. May act as a carbohydrate transporter. This is Early nodulin-like protein 8 from Arabidopsis thaliana (Mouse-ear cress).